An 89-amino-acid chain; its full sequence is Elongation factor 1-beta (89 aa).

The protein belongs to the EF-1-beta/EF-1-delta family.

Functionally, promotes the exchange of GDP for GTP in EF-1-alpha/GDP, thus allowing the regeneration of EF-1-alpha/GTP that could then be used to form the ternary complex EF-1-alpha/GTP/AAtRNA. The chain is Elongation factor 1-beta from Methanosarcina acetivorans (strain ATCC 35395 / DSM 2834 / JCM 12185 / C2A).